The chain runs to 313 residues: LOB domain-containing protein 36 (313 aa).

The region spanning 6 to 107 (SPCAACKFLR…HDLENAKKEL (102 aa)) is the LOB domain. The tract at residues 245–313 (GNFVDSPSTN…SEEGRRNVIG (69 aa)) is disordered. Polar residues predominate over residues 249–260 (DSPSTNNNYHTD). A compositionally biased stretch (low complexity) spans 280 to 302 (PSQSSQPLPLQTQETQTQTQPNS).

The protein belongs to the LOB domain-containing protein family. In terms of tissue distribution, expressed in trichomes, at the base of many lateral organs, including branching points of the inflorescence and floral organs and in the distal part of the pistil at stages when style and stigma start to develop. Also detected in pedicels and at the base of petals and sepals.

In terms of biological role, controls the proximal-distal patterning in petals and the adaxial-abaxial determination of leaves. Involved in the repression of the homeobox gene BP. The polypeptide is LOB domain-containing protein 36 (LBD36) (Arabidopsis thaliana (Mouse-ear cress)).